The chain runs to 496 residues: Probable histidine ammonia-lyase (496 aa).

The 5-imidazolinone (Ala-Gly) cross-link spans Ala141–Gly143. Ser142 is subject to 2,3-didehydroalanine (Ser).

This sequence belongs to the PAL/histidase family. Contains an active site 4-methylidene-imidazol-5-one (MIO), which is formed autocatalytically by cyclization and dehydration of residues Ala-Ser-Gly.

Its subcellular location is the cytoplasm. It catalyses the reaction L-histidine = trans-urocanate + NH4(+). It participates in amino-acid degradation; L-histidine degradation into L-glutamate; N-formimidoyl-L-glutamate from L-histidine: step 1/3. The protein is Probable histidine ammonia-lyase of Thermoplasma acidophilum (strain ATCC 25905 / DSM 1728 / JCM 9062 / NBRC 15155 / AMRC-C165).